The following is a 293-amino-acid chain: Pantothenate synthetase (293 aa).

30 to 37 lines the ATP pocket; it reads MGYLHKGH. H37 (proton donor) is an active-site residue. Q61 is a binding site for (R)-pantoate. Residue Q61 participates in beta-alanine binding. 147-150 is an ATP binding site; sequence GEKD. Residue Q153 coordinates (R)-pantoate. ATP-binding positions include V176 and 184 to 187; that span reads CSSR.

This sequence belongs to the pantothenate synthetase family. In terms of assembly, homodimer.

Its subcellular location is the cytoplasm. The catalysed reaction is (R)-pantoate + beta-alanine + ATP = (R)-pantothenate + AMP + diphosphate + H(+). It participates in cofactor biosynthesis; (R)-pantothenate biosynthesis; (R)-pantothenate from (R)-pantoate and beta-alanine: step 1/1. Functionally, catalyzes the condensation of pantoate with beta-alanine in an ATP-dependent reaction via a pantoyl-adenylate intermediate. This chain is Pantothenate synthetase, found in Brucella melitensis biotype 2 (strain ATCC 23457).